The following is a 350-amino-acid chain: Uroporphyrinogen decarboxylase (350 aa).

Substrate contacts are provided by residues 28–32, Asp-78, Tyr-154, Thr-209, and His-325; that span reads RQAGR.

It belongs to the uroporphyrinogen decarboxylase family. As to quaternary structure, homodimer.

It is found in the cytoplasm. It catalyses the reaction uroporphyrinogen III + 4 H(+) = coproporphyrinogen III + 4 CO2. It participates in porphyrin-containing compound metabolism; protoporphyrin-IX biosynthesis; coproporphyrinogen-III from 5-aminolevulinate: step 4/4. Catalyzes the decarboxylation of four acetate groups of uroporphyrinogen-III to yield coproporphyrinogen-III. The polypeptide is Uroporphyrinogen decarboxylase (Nitrobacter hamburgensis (strain DSM 10229 / NCIMB 13809 / X14)).